Here is a 343-residue protein sequence, read N- to C-terminus: Anthranilate phosphoribosyltransferase (343 aa).

5-phospho-alpha-D-ribose 1-diphosphate-binding positions include glycine 84, 87–88 (GD), threonine 92, 94–97 (NIST), 112–120 (KHGNRSASS), and serine 124. Position 84 (glycine 84) interacts with anthranilate. Serine 96 serves as a coordination point for Mg(2+). An anthranilate-binding site is contributed by asparagine 115. Arginine 170 provides a ligand contact to anthranilate. Positions 229 and 230 each coordinate Mg(2+).

This sequence belongs to the anthranilate phosphoribosyltransferase family. Homodimer. The cofactor is Mg(2+).

The enzyme catalyses N-(5-phospho-beta-D-ribosyl)anthranilate + diphosphate = 5-phospho-alpha-D-ribose 1-diphosphate + anthranilate. It functions in the pathway amino-acid biosynthesis; L-tryptophan biosynthesis; L-tryptophan from chorismate: step 2/5. In terms of biological role, catalyzes the transfer of the phosphoribosyl group of 5-phosphorylribose-1-pyrophosphate (PRPP) to anthranilate to yield N-(5'-phosphoribosyl)-anthranilate (PRA). This Bordetella bronchiseptica (strain ATCC BAA-588 / NCTC 13252 / RB50) (Alcaligenes bronchisepticus) protein is Anthranilate phosphoribosyltransferase.